Reading from the N-terminus, the 184-residue chain is Photosystem I assembly protein Ycf4 (184 aa).

Helical transmembrane passes span 19–39 (ISNLCWAFTLFLGSLGFVLVG) and 57–77 (IIFFPQGIVMSFYGIAGLFIS).

Belongs to the Ycf4 family.

The protein localises to the plastid thylakoid membrane. Its function is as follows. Seems to be required for the assembly of the photosystem I complex. This chain is Photosystem I assembly protein Ycf4, found in Cuscuta reflexa (Southern Asian dodder).